A 113-amino-acid polypeptide reads, in one-letter code: Large ribosomal subunit protein bL19 (113 aa).

The protein belongs to the bacterial ribosomal protein bL19 family.

Functionally, this protein is located at the 30S-50S ribosomal subunit interface and may play a role in the structure and function of the aminoacyl-tRNA binding site. This is Large ribosomal subunit protein bL19 from Moorella thermoacetica (strain ATCC 39073 / JCM 9320).